A 499-amino-acid chain; its full sequence is Serine/threonine-protein phosphatase 5 (499 aa).

The disordered stretch occupies residues 1 to 23; the sequence is MAMAEGERTECAEPPRDEPPADG. Ala-2 is subject to N-acetylalanine. TPR repeat units lie at residues 28-61, 62-95, and 96-129; these read AEEL…NPSN, AIYY…DKKY, and IKGY…KPHD. The catalytic stretch occupies residues 184-499; that stretch reads GKVTISFMKE…ANTLLQLGMM (316 aa). Residues Asp-242, His-244, and Asp-271 each coordinate Mn(2+). His-244 is a substrate binding site. Residues Arg-275 and 303-304 contribute to the substrate site; that span reads NH. Asn-303 provides a ligand contact to Mn(2+). His-304 functions as the Proton donor/acceptor in the catalytic mechanism. Residue His-352 coordinates Mn(2+). Substrate contacts are provided by Arg-400 and His-427. Residue His-427 participates in Mn(2+) binding. Residues 495 to 499 are required for autoinhibition; it reads QLGMM.

It belongs to the PPP phosphatase family. PP-5 (PP-T) subfamily. As to quaternary structure, probably forms a complex composed of chaperones HSP90 and HSP70, co-chaperones STIP1/HOP, CDC37, PPP5C, PTGES3/p23, TSC1 and client protein TSC2. Probably forms a complex composed of chaperones HSP90 and HSP70, co-chaperones CDC37, PPP5C, TSC1 and client protein TSC2, CDK4, AKT, RAF1 and NR3C1; this complex does not contain co-chaperones STIP1/HOP and PTGES3/p23. Part of a complex with HSP90/HSP90AA1 and steroid receptors. Interacts (via TPR repeats) with HSP90AA1 (via TPR repeat-binding motif) or HSPA1A/HSPA1B; the interaction is direct and activates the phosphatase activity. Dissociates from HSPA1A/HSPA1B and HSP90AA1 in response to arachidonic acid. Interacts with CPNE1 (via VWFA domain). Interacts with CDC16, CDC27. Interacts with KLHDC10 (via the 6 Kelch repeats); inhibits the phosphatase activity on MAP3K5. Interacts with ATM and ATR; both interactions are induced by DNA damage and enhance ATM and ATR kinase activity. Interacts with RAD17; reduced by DNA damage. Interacts with nuclear receptors such as NR3C1/GCR and PPARG (activated by agonist); regulates their transactivation activities. Interacts (via TPR repeats) with S100 proteins S100A1, S100A2, S100A6, S100B and S100P; the interactions are calcium-dependent, strongly activate PPP5C phosphatase activity and compete with HSP90AA1 and MAP3K5 interactions. Interacts with SMAD2 and SMAD3 but not with SMAD1; decreases SMAD3 phosphorylation and protein levels. Interacts (via TPR repeats) with CRY1 and CRY2; the interaction with CRY2 down-regulates the phosphatase activity on CSNK1E. Interacts (via TPR repeats) with the active form of RAC1, GNA12 or GNA13; these interactions activate the phosphatase activity and translocate PPP5C to the cell membrane. Interacts with FLCN. Requires Mg(2+) as cofactor. Mn(2+) is required as a cofactor. Activated by at least two different proteolytic cleavages producing a 56 kDa and a 50 kDa form. Ubiquitous.

The protein localises to the nucleus. It localises to the cytoplasm. The protein resides in the cell membrane. It carries out the reaction O-phospho-L-seryl-[protein] + H2O = L-seryl-[protein] + phosphate. The catalysed reaction is O-phospho-L-threonyl-[protein] + H2O = L-threonyl-[protein] + phosphate. Autoinhibited. In the autoinhibited state, the TPR domain interacts with the catalytic region and prevents substrate access to the catalytic pocket. Allosterically activated by various polyunsaturated fatty acids, free long-chain fatty-acids and long-chain fatty acyl-CoA esters, arachidonic acid being the most effective activator. HSP90A and probably RAC1, GNA12 and GNA13 can also release the autoinhibition by the TPR repeat. Activation by RAC1, GNA12 and GNA13 is synergistic with the one produced by fatty acids binding. Inhibited by okadaic acid. In terms of biological role, serine/threonine-protein phosphatase that dephosphorylates a myriad of proteins involved in different signaling pathways including the kinases CSNK1E, ASK1/MAP3K5, PRKDC and RAF1, the nuclear receptors NR3C1, PPARG, ESR1 and ESR2, SMAD proteins and TAU/MAPT. Implicated in wide ranging cellular processes, including apoptosis, differentiation, DNA damage response, cell survival, regulation of ion channels or circadian rhythms, in response to steroid and thyroid hormones, calcium, fatty acids, TGF-beta as well as oxidative and genotoxic stresses. Participates in the control of DNA damage response mechanisms such as checkpoint activation and DNA damage repair through, for instance, the regulation ATM/ATR-signaling and dephosphorylation of PRKDC and TP53BP1. Inhibits ASK1/MAP3K5-mediated apoptosis induced by oxidative stress. Plays a positive role in adipogenesis, mainly through the dephosphorylation and activation of PPARG transactivation function. Also dephosphorylates and inhibits the anti-adipogenic effect of NR3C1. Regulates the circadian rhythms, through the dephosphorylation and activation of CSNK1E. May modulate TGF-beta signaling pathway by the regulation of SMAD3 phosphorylation and protein expression levels. Dephosphorylates and may play a role in the regulation of TAU/MAPT. Through their dephosphorylation, may play a role in the regulation of ions channels such as KCNH2. Dephosphorylate FNIP1, disrupting interaction with HSP90AA1/Hsp90. This Homo sapiens (Human) protein is Serine/threonine-protein phosphatase 5 (PPP5C).